Consider the following 708-residue polypeptide: C-Jun-amino-terminal kinase-interacting protein 1 (708 aa).

Residues 1-26 form a disordered region; the sequence is MAERESGLSGGAASPPAASPFLGLHI. Residues 11–24 are compositionally biased toward low complexity; sequence GAASPPAASPFLGL. Residues S14, S28, and S39 each carry the phosphoserine modification. Positions 69–368 are disordered; sequence PPRAGLLSAG…PPRASLSSDT (300 aa). Over residues 71-87 the composition is skewed to low complexity; sequence RAGLLSAGSSGSAGSRL. At T103 the chain carries Phosphothreonine; by MAPK8, MAPK9 and MAPK10. The segment covering 105–116 has biased composition (acidic residues); the sequence is GAEDDEEDDDEL. The tract at residues 126–282 is JNK-binding domain (JBD); sequence SKAESGQEPA…EATEEIYLTP (157 aa). A Phosphoserine modification is found at S149. The segment at 154–173 is minimal inhibitory domain (MID); the sequence is RPKRPTTLNLFPQVPRSQDT. Positions 159–179 are enriched in polar residues; it reads TTLNLFPQVPRSQDTLNNNSL. S178, S184, S190, S192, and S193 each carry phosphoserine. Positions 191–201 are enriched in polar residues; sequence RSSSPLKTGEQ. T202 carries the phosphothreonine; by MAPK8, MAPK9 and MAPK10 modification. S211 is modified (phosphoserine). Polar residues predominate over residues 220-232; it reads PVPTQDRGTSTDS. The segment covering 264 to 274 has biased composition (basic and acidic residues); that stretch reads IHYQADVRLEA. The tract at residues 280–468 is interaction with MAP3K7; that stretch reads LTPVQRPPDP…NVFMSGRSRS (189 aa). Over residues 292 to 308 the composition is skewed to polar residues; that stretch reads PTSTFLPPTESRMSVSS. Phosphoserine occurs at positions 308, 325, 327, 337, 352, 363, 366, 404, and 406. 2 consecutive short sequence motifs (D-box) follow at residues 350–357 and 361–369; these read RGSLGEPP and RASLSSDTS. Position 408 is a phosphothreonine (T408). The interval 426–448 is disordered; sequence EEYEEAPQPRPPTCLSEDSTPDE. A phosphoserine mark is found at S441 and S444. Position 445 is a phosphothreonine (T445). Residues S466, S468, S469, and S470 each carry the phosphoserine modification. The interval 468 to 657 is interaction with VRK2; that stretch reads SSSAESFGLF…PKNNKYFGFI (190 aa). The SH3 domain occupies 485-546; sequence EHEQTHRAIF…PAYYAIEVTK (62 aa). A PID domain is found at 558-697; it reads SDWIDQFRVK…FQQFYKQFVE (140 aa).

It belongs to the JIP scaffold family. In terms of assembly, forms homo- or heterooligomeric complexes. Binds specific components of the JNK signaling pathway namely MAPK8/JNK1, MAPK9/JNK2, MAPK10/JNK3, MAP2K7/MKK7, MAP3K11/MLK3 and DLK1. Also binds the proline-rich domain-containing splice variant of apolipoprotein E receptor 2 (ApoER2). Interacts, via the PID domain, with ARHGEF28. Binds the cytoplasmic tails of LRP1 and LRP2 (Megalin). Binds the TPR motif-containing C-terminal of kinesin light chain, KLC1. Pre-assembled MAPK8IP1 scaffolding complexes are then transported as a cargo of kinesin, to the required subcellular location. Interacts with the cytoplasmic domain of APP. Interacts with DCLK2, VRK2 and MAP3K7/TAK1. Found in a complex with SH3RF1, RAC1, MAP3K11/MLK3, MAP2K7/MKK7 and MAPK8/JNK1. Found in a complex with SH3RF1, RAC2, MAP3K7/TAK1, MAP2K7/MKK7, MAPK8/JNK1 and MAPK9/JNK2. Interacts with SH3RF2. In terms of processing, phosphorylated by MAPK8, MAPK9 and MAPK10. Phosphorylation on Thr-103 is also necessary for the dissociation and activation of MAP3K12. Phosphorylated by VRK2. Hyperphosphorylated during mitosis following activation of stress-activated and MAP kinases. Post-translationally, ubiquitinated. Two preliminary events are required to prime for ubiquitination; phosphorylation and an increased in intracellular calcium concentration. Then, the calcium influx initiates ubiquitination and degradation by the ubiquitin-proteasome pathway. In terms of tissue distribution, highly expressed in brain and pancreatic beta-cells. Weaker expression found in kidney.

It is found in the cytoplasm. Its subcellular location is the perinuclear region. It localises to the nucleus. The protein resides in the endoplasmic reticulum membrane. The protein localises to the mitochondrion membrane. Functionally, the JNK-interacting protein (JIP) group of scaffold proteins selectively mediates JNK signaling by aggregating specific components of the MAPK cascade to form a functional JNK signaling module. Required for JNK activation in response to excitotoxic stress. Cytoplasmic MAPK8IP1 causes inhibition of JNK-regulated activity by retaining JNK in the cytoplasm and thus inhibiting the JNK phosphorylation of c-Jun. May also participate in ApoER2-specific reelin signaling. Directly, or indirectly, regulates GLUT2 gene expression and beta-cell function. Appears to have a role in cell signaling in mature and developing nerve terminals. May function as a regulator of vesicle transport, through interactions with the JNK-signaling components and motor proteins. Functions as an anti-apoptotic protein and whose level seems to influence the beta-cell death or survival response. Acts as a scaffold protein that coordinates with SH3RF1 in organizing different components of the JNK pathway, including RAC1 or RAC2, MAP3K11/MLK3 or MAP3K7/TAK1, MAP2K7/MKK7, MAPK8/JNK1 and/or MAPK9/JNK2 into a functional multiprotein complex to ensure the effective activation of the JNK signaling pathway. Regulates the activation of MAPK8/JNK1 and differentiation of CD8(+) T-cells. This chain is C-Jun-amino-terminal kinase-interacting protein 1 (Mapk8ip1), found in Rattus norvegicus (Rat).